The chain runs to 329 residues: DNA-directed RNA polymerase subunit alpha (329 aa).

Residues 1-234 (MQSAVNEFLT…QQLAVFVDLE (234 aa)) form an alpha N-terminal domain (alpha-NTD) region. Positions 248-329 (IDPVLLRPVD…WPPASLKNND (82 aa)) are alpha C-terminal domain (alpha-CTD).

Belongs to the RNA polymerase alpha chain family. In terms of assembly, homodimer. The RNAP catalytic core consists of 2 alpha, 1 beta, 1 beta' and 1 omega subunit. When a sigma factor is associated with the core the holoenzyme is formed, which can initiate transcription.

It carries out the reaction RNA(n) + a ribonucleoside 5'-triphosphate = RNA(n+1) + diphosphate. In terms of biological role, DNA-dependent RNA polymerase catalyzes the transcription of DNA into RNA using the four ribonucleoside triphosphates as substrates. The sequence is that of DNA-directed RNA polymerase subunit alpha from Saccharophagus degradans (strain 2-40 / ATCC 43961 / DSM 17024).